Consider the following 67-residue polypeptide: Small, acid-soluble spore protein 2 (67 aa).

Belongs to the alpha/beta-type SASP family.

Functionally, SASP are bound to spore DNA. They are double-stranded DNA-binding proteins that cause DNA to change to an a-like conformation. They protect the DNA backbone from chemical and enzymatic cleavage and are thus involved in dormant spore's high resistance to UV light. This is Small, acid-soluble spore protein 2 (Su-2) from Sporosarcina ureae.